Reading from the N-terminus, the 128-residue chain is ATP synthase epsilon chain (128 aa).

It belongs to the ATPase epsilon chain family. As to quaternary structure, F-type ATPases have 2 components, CF(1) - the catalytic core - and CF(0) - the membrane proton channel. CF(1) has five subunits: alpha(3), beta(3), gamma(1), delta(1), epsilon(1). CF(0) has three main subunits: a, b and c.

It is found in the cell inner membrane. In terms of biological role, produces ATP from ADP in the presence of a proton gradient across the membrane. In Sulfurovum sp. (strain NBC37-1), this protein is ATP synthase epsilon chain.